Reading from the N-terminus, the 129-residue chain is Small ribosomal subunit protein uS9 (129 aa).

A compositionally biased stretch (basic and acidic residues) spans 104-113; sequence TRDSRVVERK. The disordered stretch occupies residues 104–129; sequence TRDSRVVERKKPGKRKARRSRQFSKR. Positions 114–129 are enriched in basic residues; sequence KPGKRKARRSRQFSKR.

This sequence belongs to the universal ribosomal protein uS9 family.

This is Small ribosomal subunit protein uS9 from Sulfurimonas denitrificans (strain ATCC 33889 / DSM 1251) (Thiomicrospira denitrificans (strain ATCC 33889 / DSM 1251)).